Here is a 341-residue protein sequence, read N- to C-terminus: Protein BEARSKIN2 (341 aa).

One can recognise an NAC domain in the interval 9–160 (VPPGFRFHPT…GWVVCRVFMK (152 aa)). The DNA-binding element occupies 109-166 (IGMRKTLVFYKGRAPHGQKTDWIMHEYRLEDADDPQANPSEDGWVVCRVFMKKNLFKV).

As to expression, expressed throughout the root cap, in both columella (COL) and lateral root cap (LRC) cells, with higher levels in the COL-adjoining LRC than the upper LRC. Also present at low levels expression in the tips of cotyledons and the cotyledon vasculature, as weel as in vasculature of the first pair of true leaves and at the hydathodes.

The protein localises to the nucleus. Its function is as follows. Transcription activator. Together with BRN1 and SMB, regulates cellular maturation of root cap. Promotes the expression of genes involved in secondary cell walls (SCW) biosynthesis. The polypeptide is Protein BEARSKIN2 (BRN2) (Arabidopsis thaliana (Mouse-ear cress)).